Reading from the N-terminus, the 427-residue chain is Pre-mRNA-splicing factor PRP46 (427 aa).

WD repeat units lie at residues 113–153 (GHHG…LKVT), 156–195 (AHDMTVRDLAISNRHPYMFSVSEDKTVKCWDLEKNTAIRN), 198–237 (GHLSGVHTVDIHPTVDVVVTAGRDSVVKVWDIRTRLPVMT), 240–281 (GHKG…KVLT), 283–322 (HQRTVRDISVHPSEFSFASACTNDIRSWLLPKGELLTNFV), 324–362 (QDLDVINTVSINQDDVLFAGSDNGSLTFFDYKSGHKYQT), and 373–412 (ESERGILSSTFDGTGLRLLTGETDRTIKIWKQDETASQDT). The tract at residues 404–427 (QDETASQDTHPNLPWNPKLDSQRL) is disordered.

Belongs to the WD repeat PRL1/PRL2 family. As to quaternary structure, associated with the spliceosome.

It is found in the cytoplasm. It localises to the nucleus. In terms of biological role, involved in pre-mRNA splicing and required for cell cycle progression at G2/M. This chain is Pre-mRNA-splicing factor PRP46 (PRP46), found in Candida glabrata (strain ATCC 2001 / BCRC 20586 / JCM 3761 / NBRC 0622 / NRRL Y-65 / CBS 138) (Yeast).